Here is a 218-residue protein sequence, read N- to C-terminus: Probable signal peptidase I-2 (218 aa).

Residues 1-26 (MTENIVRETSKKKESPPENTWLELGK) lie on the Cytoplasmic side of the membrane. A helical membrane pass occupies residues 27-43 (TMVTAVILAIGIRTFVA). At 44–218 (EARYIPSSSM…ISPQTVPESR (175 aa)) the chain is on the periplasmic side. Catalysis depends on residues serine 52 and lysine 100.

Belongs to the peptidase S26 family.

It localises to the cell membrane. The enzyme catalyses Cleavage of hydrophobic, N-terminal signal or leader sequences from secreted and periplasmic proteins.. The polypeptide is Probable signal peptidase I-2 (lepB2) (Synechocystis sp. (strain ATCC 27184 / PCC 6803 / Kazusa)).